The chain runs to 85 residues: MKLLLLLTISASMLIEGLVNADGYIRGGDGCKVSCVINHVFCDNECKAAGGSYGYCWGWGLACWCEGLPADREWDYETNTCGGKK.

The signal sequence occupies residues 1–21 (MKLLLLLTISASMLIEGLVNA). Residues 22–82 (DGYIRGGDGC…EWDYETNTCG (61 aa)) enclose the LCN-type CS-alpha/beta domain. 4 disulfides stabilise this stretch: C31–C81, C35–C56, C42–C63, and C46–C65. Position 82 is a glycine amide (G82).

Belongs to the long (4 C-C) scorpion toxin superfamily. Sodium channel inhibitor family. Beta subfamily. Expressed by the venom gland.

Its subcellular location is the secreted. In terms of biological role, depressant insect beta-toxins cause a transient contraction paralysis followed by a slow flaccid paralysis. They bind voltage-independently at site-4 of sodium channels (Nav) and block action potentials, primarily by depolarizing the axonal membrane and suppressing the sodium current. This depressant toxin is active only on insects. It is found in a relatively small amount in the venom, and its activity on insects is 10-fold higher compared to other known depressant toxins. The sequence is that of Beta-insect depressant toxin Lqh-dprIT3b from Leiurus hebraeus (Hebrew deathstalker scorpion).